Here is a 274-residue protein sequence, read N- to C-terminus: Large ribosomal subunit protein uL2 (274 aa).

Residues 224 to 256 (AMNPIDHPHGGGEGRTGEGRHAVDPWGNLTKGY) are disordered. Positions 229-246 (DHPHGGGEGRTGEGRHAV) are enriched in basic and acidic residues.

Belongs to the universal ribosomal protein uL2 family. In terms of assembly, part of the 50S ribosomal subunit. Forms a bridge to the 30S subunit in the 70S ribosome.

Its function is as follows. One of the primary rRNA binding proteins. Required for association of the 30S and 50S subunits to form the 70S ribosome, for tRNA binding and peptide bond formation. It has been suggested to have peptidyltransferase activity; this is somewhat controversial. Makes several contacts with the 16S rRNA in the 70S ribosome. The protein is Large ribosomal subunit protein uL2 of Acidovorax sp. (strain JS42).